The following is a 273-amino-acid chain: MFDLTGKNVCYVADCGGIALETCKVLMTKNIAKLAMLYSVENPQAIAQLQAIKPSTQIFFWTYDVTMAREDMKQYFDEVMVQMDYIDVLINGATLCDEQNIDDTINTNLTGMMNTCATVLPYMDKQQLGKGGLIVNVTSVVGLDPSPVFCAYSASKFGVIGFTRSLADPLYYTQNGVAVMAVCCGPTKMFVDRQLTAFLSYGQPFVDRLRTAPCQSTTICAKNIVKAIECAVNGRIWIADKGELELVKLHWYWHMADQLVNYMHSTSEEKDED.

Y11–L34 is an NAD(+) binding site. S139 provides a ligand contact to substrate. Y152 acts as the Proton acceptor in catalysis.

The protein belongs to the short-chain dehydrogenases/reductases (SDR) family.

This Drosophila immigrans (Fruit fly) protein is Alcohol dehydrogenase-related 31 kDa protein (Adhr).